A 345-amino-acid polypeptide reads, in one-letter code: S-adenosylmethionine:tRNA ribosyltransferase-isomerase (345 aa).

The protein belongs to the QueA family. Monomer.

The protein localises to the cytoplasm. It catalyses the reaction 7-aminomethyl-7-carbaguanosine(34) in tRNA + S-adenosyl-L-methionine = epoxyqueuosine(34) in tRNA + adenine + L-methionine + 2 H(+). It participates in tRNA modification; tRNA-queuosine biosynthesis. Its function is as follows. Transfers and isomerizes the ribose moiety from AdoMet to the 7-aminomethyl group of 7-deazaguanine (preQ1-tRNA) to give epoxyqueuosine (oQ-tRNA). The protein is S-adenosylmethionine:tRNA ribosyltransferase-isomerase of Lactococcus lactis subsp. lactis (strain IL1403) (Streptococcus lactis).